The following is a 313-amino-acid chain: tRNA dimethylallyltransferase (313 aa).

11–18 contributes to the ATP binding site; that stretch reads GPTASGKT. Residue 13-18 participates in substrate binding; the sequence is TASGKT. Interaction with substrate tRNA stretches follow at residues 36 to 39, 160 to 164, and 241 to 246; these read DSAL, QRINR, and RCVGYR.

This sequence belongs to the IPP transferase family. In terms of assembly, monomer. The cofactor is Mg(2+).

It catalyses the reaction adenosine(37) in tRNA + dimethylallyl diphosphate = N(6)-dimethylallyladenosine(37) in tRNA + diphosphate. Catalyzes the transfer of a dimethylallyl group onto the adenine at position 37 in tRNAs that read codons beginning with uridine, leading to the formation of N6-(dimethylallyl)adenosine (i(6)A). This Haemophilus ducreyi (strain 35000HP / ATCC 700724) protein is tRNA dimethylallyltransferase.